Reading from the N-terminus, the 178-residue chain is Transcriptional repressor NrdR (178 aa).

The disordered stretch occupies residues 1-21 (MRCPFCGHEDTQVKDSRPHED). The segment at 3–34 (CPFCGHEDTQVKDSRPHEDGAAIRRRRICAAC) is a zinc-finger region. The segment covering 7 to 21 (GHEDTQVKDSRPHED) has biased composition (basic and acidic residues). Residues 49-139 (LYVVKADDRR…VHWDFRETKD (91 aa)) form the ATP-cone domain.

This sequence belongs to the NrdR family. Zn(2+) serves as cofactor.

In terms of biological role, negatively regulates transcription of bacterial ribonucleotide reductase nrd genes and operons by binding to NrdR-boxes. The protein is Transcriptional repressor NrdR of Gluconacetobacter diazotrophicus (strain ATCC 49037 / DSM 5601 / CCUG 37298 / CIP 103539 / LMG 7603 / PAl5).